A 521-amino-acid polypeptide reads, in one-letter code: Protein nucleotidyltransferase YdiU (521 aa).

ATP is bound by residues Gly109, Gly111, Arg112, Lys131, Asp143, Gly144, Arg194, and Arg201. Catalysis depends on Asp270, which acts as the Proton acceptor. Residues Asn271 and Asp280 each contribute to the Mg(2+) site. Position 280 (Asp280) interacts with ATP.

Belongs to the SELO family. Mg(2+) serves as cofactor. It depends on Mn(2+) as a cofactor.

The catalysed reaction is L-seryl-[protein] + ATP = 3-O-(5'-adenylyl)-L-seryl-[protein] + diphosphate. It catalyses the reaction L-threonyl-[protein] + ATP = 3-O-(5'-adenylyl)-L-threonyl-[protein] + diphosphate. The enzyme catalyses L-tyrosyl-[protein] + ATP = O-(5'-adenylyl)-L-tyrosyl-[protein] + diphosphate. It carries out the reaction L-histidyl-[protein] + UTP = N(tele)-(5'-uridylyl)-L-histidyl-[protein] + diphosphate. The catalysed reaction is L-seryl-[protein] + UTP = O-(5'-uridylyl)-L-seryl-[protein] + diphosphate. It catalyses the reaction L-tyrosyl-[protein] + UTP = O-(5'-uridylyl)-L-tyrosyl-[protein] + diphosphate. Functionally, nucleotidyltransferase involved in the post-translational modification of proteins. It can catalyze the addition of adenosine monophosphate (AMP) or uridine monophosphate (UMP) to a protein, resulting in modifications known as AMPylation and UMPylation. The sequence is that of Protein nucleotidyltransferase YdiU from Burkholderia pseudomallei (strain K96243).